The sequence spans 280 residues: Diaminopimelate epimerase (280 aa).

Substrate is bound by residues N13 and N66. C75 (proton donor) is an active-site residue. Substrate contacts are provided by residues 76-77 (GN), N165, N198, and 216-217 (ER). The active-site Proton acceptor is C225. Substrate is bound at residue 226 to 227 (GT).

This sequence belongs to the diaminopimelate epimerase family. As to quaternary structure, homodimer.

Its subcellular location is the cytoplasm. It carries out the reaction (2S,6S)-2,6-diaminopimelate = meso-2,6-diaminopimelate. The protein operates within amino-acid biosynthesis; L-lysine biosynthesis via DAP pathway; DL-2,6-diaminopimelate from LL-2,6-diaminopimelate: step 1/1. In terms of biological role, catalyzes the stereoinversion of LL-2,6-diaminopimelate (L,L-DAP) to meso-diaminopimelate (meso-DAP), a precursor of L-lysine and an essential component of the bacterial peptidoglycan. This Cyanothece sp. (strain PCC 7425 / ATCC 29141) protein is Diaminopimelate epimerase.